A 177-amino-acid polypeptide reads, in one-letter code: Chorismate pyruvate-lyase (177 aa).

4 residues coordinate substrate: methionine 37, arginine 79, leucine 117, and glutamate 159.

This sequence belongs to the UbiC family. As to quaternary structure, monomer.

It is found in the cytoplasm. It catalyses the reaction chorismate = 4-hydroxybenzoate + pyruvate. It participates in cofactor biosynthesis; ubiquinone biosynthesis. Functionally, removes the pyruvyl group from chorismate, with concomitant aromatization of the ring, to provide 4-hydroxybenzoate (4HB) for the ubiquinone pathway. This chain is Chorismate pyruvate-lyase, found in Sodalis glossinidius (strain morsitans).